The primary structure comprises 345 residues: Sesquiterpene synthase GALMADRAFT_104215 (345 aa).

Positions 91, 226, 230, and 234 each coordinate Mg(2+). Positions 91–95 (DEFTD) match the DDXXD motif motif. R316 and Y317 together coordinate (2E,6E)-farnesyl diphosphate.

This sequence belongs to the terpene synthase family. The cofactor is Mg(2+).

The enzyme catalyses (2E,6E)-farnesyl diphosphate = beta-gurjunene + diphosphate. Its function is as follows. Terpene cyclase that catalyzes the cyclization of farnesyl diphosphate (FPP) to beta-gurjunene. The polypeptide is Sesquiterpene synthase GALMADRAFT_104215 (Galerina marginata (strain CBS 339.88)).